We begin with the raw amino-acid sequence, 86 residues long: Small ribosomal subunit protein bS16 (86 aa).

Belongs to the bacterial ribosomal protein bS16 family.

This chain is Small ribosomal subunit protein bS16, found in Xylella fastidiosa (strain M12).